A 170-amino-acid chain; its full sequence is Small ribosomal subunit protein uS5 (170 aa).

The 64-residue stretch at 13-76 (LTEKLIGVNR…DQARRSMVKI (64 aa)) folds into the S5 DRBM domain.

The protein belongs to the universal ribosomal protein uS5 family. In terms of assembly, part of the 30S ribosomal subunit. Contacts proteins S4 and S8.

Functionally, with S4 and S12 plays an important role in translational accuracy. In terms of biological role, located at the back of the 30S subunit body where it stabilizes the conformation of the head with respect to the body. The sequence is that of Small ribosomal subunit protein uS5 from Laribacter hongkongensis (strain HLHK9).